We begin with the raw amino-acid sequence, 535 residues long: Calcium-dependent protein kinase 7 (535 aa).

The disordered stretch occupies residues Met-1 to Ser-29. Gly-2 carries N-myristoyl glycine lipidation. The Protein kinase domain maps to Tyr-59–Ile-317. ATP is bound by residues Val-65–Thr-73 and Lys-88. Catalysis depends on Asp-183, which acts as the Proton acceptor. Phosphoserine is present on Ser-223. The interval Ala-323–Ile-353 is autoinhibitory domain. 4 EF-hand domains span residues Glu-360–Gln-395, Ile-396–Met-431, Ala-432–Asn-467, and Thr-468–Trp-504. Residues Asp-373, Asn-375, Lys-379, Glu-384, Asp-409, Asp-411, Asp-413, Thr-415, Glu-420, Asp-445, Asn-447, Ser-449, Tyr-451, Glu-456, Asp-482, Asp-484, Asp-486, and Arg-488 each contribute to the Ca(2+) site. The residue at position 490 (Ser-490) is a Phosphoserine. Position 493 (Glu-493) interacts with Ca(2+).

Belongs to the protein kinase superfamily. Ser/Thr protein kinase family. CDPK subfamily.

Its subcellular location is the cell membrane. The catalysed reaction is L-seryl-[protein] + ATP = O-phospho-L-seryl-[protein] + ADP + H(+). It carries out the reaction L-threonyl-[protein] + ATP = O-phospho-L-threonyl-[protein] + ADP + H(+). Activated by calcium. Autophosphorylation may play an important role in the regulation of the kinase activity. May play a role in signal transduction pathways that involve calcium as a second messenger. This is Calcium-dependent protein kinase 7 (CPK7) from Arabidopsis thaliana (Mouse-ear cress).